The following is a 134-amino-acid chain: uncharacterized protein (134 aa).

The chain crosses the membrane as a helical span at residues 13-35 (FFIAFSAYLVVILLMTAVSVYYL).

The protein localises to the membrane. This is an uncharacterized protein from Archaeoglobus fulgidus (strain ATCC 49558 / DSM 4304 / JCM 9628 / NBRC 100126 / VC-16).